We begin with the raw amino-acid sequence, 250 residues long: DNA repair protein RecO (250 aa).

The protein belongs to the RecO family.

In terms of biological role, involved in DNA repair and RecF pathway recombination. The chain is DNA repair protein RecO from Staphylococcus haemolyticus (strain JCSC1435).